The sequence spans 367 residues: 15-cis-zeta-carotene isomerase, chloroplastic (367 aa).

The transit peptide at 1-58 directs the protein to the chloroplast; that stretch reads MAVYHLLLSSPPSLLLLPPSPRRPNLTLIRRIPAHPRLGNSTSLLSSSSPVIRKILVR. 6 helical membrane passes run 95 to 115, 137 to 157, 172 to 192, 211 to 231, 269 to 289, and 339 to 359; these read SWVY…VVWI, EVAM…LASL, VLFA…FINH, AIWV…FNLL, LWIG…HHLF, and LPYL…PLMQ.

Expressed in leaves and at lower levels in roots.

Its subcellular location is the plastid. The protein localises to the chloroplast membrane. The catalysed reaction is 9,9',15-tri-cis-zeta-carotene = 9,9'-di-cis-zeta-carotene. In terms of biological role, isomerase involved in the biosynthesis of carotenoids. Catalyzes the cis- to trans-conversion of the 15-cis-bond in 9,15,9'-tri-cis-zeta-carotene. The sequence is that of 15-cis-zeta-carotene isomerase, chloroplastic (Z-ISO) from Arabidopsis thaliana (Mouse-ear cress).